A 238-amino-acid chain; its full sequence is Ribonuclease PH (238 aa).

Phosphate is bound by residues arginine 86 and 124–126 (GTR).

The protein belongs to the RNase PH family. In terms of assembly, homohexameric ring arranged as a trimer of dimers.

The catalysed reaction is tRNA(n+1) + phosphate = tRNA(n) + a ribonucleoside 5'-diphosphate. Functionally, phosphorolytic 3'-5' exoribonuclease that plays an important role in tRNA 3'-end maturation. Removes nucleotide residues following the 3'-CCA terminus of tRNAs; can also add nucleotides to the ends of RNA molecules by using nucleoside diphosphates as substrates, but this may not be physiologically important. Probably plays a role in initiation of 16S rRNA degradation (leading to ribosome degradation) during starvation. In Geotalea daltonii (strain DSM 22248 / JCM 15807 / FRC-32) (Geobacter daltonii), this protein is Ribonuclease PH.